Consider the following 201-residue polypeptide: Dephospho-CoA kinase (201 aa).

Positions 4–201 constitute a DPCK domain; that stretch reads SVGLTGNIAS…KYLREAKIKQ (198 aa). 12–17 contacts ATP; the sequence is ASGKST.

Belongs to the CoaE family.

The protein localises to the cytoplasm. The catalysed reaction is 3'-dephospho-CoA + ATP = ADP + CoA + H(+). The protein operates within cofactor biosynthesis; coenzyme A biosynthesis; CoA from (R)-pantothenate: step 5/5. Its function is as follows. Catalyzes the phosphorylation of the 3'-hydroxyl group of dephosphocoenzyme A to form coenzyme A. The chain is Dephospho-CoA kinase from Legionella pneumophila (strain Paris).